Reading from the N-terminus, the 185-residue chain is Ribosome-recycling factor (185 aa).

This sequence belongs to the RRF family.

The protein resides in the cytoplasm. Responsible for the release of ribosomes from messenger RNA at the termination of protein biosynthesis. May increase the efficiency of translation by recycling ribosomes from one round of translation to another. This is Ribosome-recycling factor from Streptococcus pneumoniae (strain P1031).